Here is a 514-residue protein sequence, read N- to C-terminus: 2,3-bisphosphoglycerate-independent phosphoglycerate mutase (514 aa).

Positions 14 and 64 each coordinate Mn(2+). Catalysis depends on S64, which acts as the Phosphoserine intermediate. Substrate-binding positions include H125, 155–156, R187, R193, 263–266, and K336; these read RD and RADR. Residues D403, H407, D444, H445, and H463 each coordinate Mn(2+).

The protein belongs to the BPG-independent phosphoglycerate mutase family. Monomer. Mn(2+) is required as a cofactor.

It catalyses the reaction (2R)-2-phosphoglycerate = (2R)-3-phosphoglycerate. The protein operates within carbohydrate degradation; glycolysis; pyruvate from D-glyceraldehyde 3-phosphate: step 3/5. Functionally, catalyzes the interconversion of 2-phosphoglycerate and 3-phosphoglycerate. The protein is 2,3-bisphosphoglycerate-independent phosphoglycerate mutase of Escherichia coli O6:H1 (strain CFT073 / ATCC 700928 / UPEC).